The primary structure comprises 394 residues: Phosphopentomutase (394 aa).

Positions 15, 288, 293, 329, 330, and 341 each coordinate Mn(2+).

The protein belongs to the phosphopentomutase family. The cofactor is Mn(2+).

It localises to the cytoplasm. The enzyme catalyses 2-deoxy-alpha-D-ribose 1-phosphate = 2-deoxy-D-ribose 5-phosphate. It catalyses the reaction alpha-D-ribose 1-phosphate = D-ribose 5-phosphate. It participates in carbohydrate degradation; 2-deoxy-D-ribose 1-phosphate degradation; D-glyceraldehyde 3-phosphate and acetaldehyde from 2-deoxy-alpha-D-ribose 1-phosphate: step 1/2. Its function is as follows. Isomerase that catalyzes the conversion of deoxy-ribose 1-phosphate (dRib-1-P) and ribose 1-phosphate (Rib-1-P) to deoxy-ribose 5-phosphate (dRib-5-P) and ribose 5-phosphate (Rib-5-P), respectively. The sequence is that of Phosphopentomutase from Bacillus pumilus (strain SAFR-032).